We begin with the raw amino-acid sequence, 132 residues long: UPF0299 membrane protein YohJ (132 aa).

The next 4 membrane-spanning stretches (helical) occupy residues 7–27, 31–51, 63–83, and 93–113; these read IIWQ…AGIF, LLPI…VLLA, GCYV…VGVM, and FGPV…VVSW.

It belongs to the UPF0299 family.

It is found in the cell inner membrane. The sequence is that of UPF0299 membrane protein YohJ from Salmonella arizonae (strain ATCC BAA-731 / CDC346-86 / RSK2980).